The sequence spans 317 residues: Acetyl-coenzyme A carboxylase carboxyl transferase subunit alpha (317 aa).

The CoA carboxyltransferase C-terminal domain occupies 37–291 (KLQEKVDKLL…GNAIEDALDD (255 aa)).

The protein belongs to the AccA family. As to quaternary structure, acetyl-CoA carboxylase is a heterohexamer composed of biotin carboxyl carrier protein (AccB), biotin carboxylase (AccC) and two subunits each of ACCase subunit alpha (AccA) and ACCase subunit beta (AccD).

It localises to the cytoplasm. The enzyme catalyses N(6)-carboxybiotinyl-L-lysyl-[protein] + acetyl-CoA = N(6)-biotinyl-L-lysyl-[protein] + malonyl-CoA. The protein operates within lipid metabolism; malonyl-CoA biosynthesis; malonyl-CoA from acetyl-CoA: step 1/1. Its function is as follows. Component of the acetyl coenzyme A carboxylase (ACC) complex. First, biotin carboxylase catalyzes the carboxylation of biotin on its carrier protein (BCCP) and then the CO(2) group is transferred by the carboxyltransferase to acetyl-CoA to form malonyl-CoA. This Rhodospirillum centenum (strain ATCC 51521 / SW) protein is Acetyl-coenzyme A carboxylase carboxyl transferase subunit alpha.